The primary structure comprises 351 residues: Photosystem II D2 protein (351 aa).

A helical transmembrane segment spans residues 39–59 (TAYLALGGWFTGTTFVTSWYT). H116 provides a ligand contact to chlorophyll a. A helical transmembrane segment spans residues 123–139 (GFMLRQFEIARLVGIRP). Pheophytin a-binding residues include Q128 and N141. A helical membrane pass occupies residues 151–164 (VFLACFLIYPLGQH). Position 196 (H196) interacts with chlorophyll a. Residues 206 to 226 (GALLCGIHGATVQNTLFEDGA) form a helical membrane-spanning segment. A plastoquinone contacts are provided by H213 and F260. Fe cation is bound at residue H213. H267 lines the Fe cation pocket. A helical transmembrane segment spans residues 277–293 (GMWTPSVGIVGLAVNLR).

It belongs to the reaction center PufL/M/PsbA/D family. PSII is composed of 1 copy each of membrane proteins PsbA, PsbB, PsbC, PsbD, PsbE, PsbF, PsbH, PsbI, PsbJ, PsbK, PsbL, PsbM, PsbT, PsbX, PsbY, Psb30/Ycf12, peripheral proteins PsbO, CyanoQ (PsbQ), PsbU, PsbV and a large number of cofactors. It forms dimeric complexes. It depends on The D1/D2 heterodimer binds P680, chlorophylls that are the primary electron donor of PSII, and subsequent electron acceptors. It shares a non-heme iron and each subunit binds pheophytin, quinone, additional chlorophylls, carotenoids and lipids. There is also a Cl(-1) ion associated with D1 and D2, which is required for oxygen evolution. The PSII complex binds additional chlorophylls, carotenoids and specific lipids. as a cofactor.

Its subcellular location is the cellular thylakoid membrane. It carries out the reaction 2 a plastoquinone + 4 hnu + 2 H2O = 2 a plastoquinol + O2. In terms of biological role, photosystem II (PSII) is a light-driven water:plastoquinone oxidoreductase that uses light energy to abstract electrons from H(2)O, generating O(2) and a proton gradient subsequently used for ATP formation. It consists of a core antenna complex that captures photons, and an electron transfer chain that converts photonic excitation into a charge separation. The D1/D2 (PsbA/PsbD) reaction center heterodimer binds P680, the primary electron donor of PSII as well as several subsequent electron acceptors. D2 is needed for assembly of a stable PSII complex. This chain is Photosystem II D2 protein, found in Prochlorococcus marinus (strain MIT 9313).